The chain runs to 206 residues: Transcription elongation factor A protein-like 5 (206 aa).

Over residues 1-26 (MEKLYKENEGKPENERNLESEGKPED) the composition is skewed to basic and acidic residues. A disordered region spans residues 1–206 (MEKLYKENEG…QKDLEDVPYV (206 aa)). Residues 27–42 (EGSTEDEGKSDEEEKP) show a composition bias toward acidic residues. Basic and acidic residues predominate over residues 43–56 (DMEGKTECEGKRED). Over residues 57–70 (EGEPGDEGQLEDEG) the composition is skewed to acidic residues. Composition is skewed to basic and acidic residues over residues 71-86 (NQEK…KPQS), 102-113 (AAEKRPAEDYVP), 121-160 (DRGT…EELR), and 196-206 (GQKDLEDVPYV).

Belongs to the TFS-II family. TFA subfamily.

Its subcellular location is the nucleus. In terms of biological role, may be involved in transcriptional regulation. In Homo sapiens (Human), this protein is Transcription elongation factor A protein-like 5 (TCEAL5).